The following is a 274-amino-acid chain: Glutamate racemase (274 aa).

Residues 9–10 and 41–42 each bind substrate; these read DS and YG. Residue C73 is the Proton donor/acceptor of the active site. 74-75 serves as a coordination point for substrate; it reads NT. The Proton donor/acceptor role is filled by C183. 184-185 lines the substrate pocket; the sequence is TH.

Belongs to the aspartate/glutamate racemases family.

The catalysed reaction is L-glutamate = D-glutamate. It functions in the pathway cell wall biogenesis; peptidoglycan biosynthesis. Provides the (R)-glutamate required for cell wall biosynthesis. This chain is Glutamate racemase, found in Shewanella baltica (strain OS185).